Here is a 718-residue protein sequence, read N- to C-terminus: Polyribonucleotide nucleotidyltransferase (718 aa).

Positions 491 and 497 each coordinate Mg(2+). The KH domain occupies 558-617 (PRMLTIKINPEKIRDVIGKGGATIRALTEETGTQIDISDDGTIVIASVDEGQAKEAQRRI). In terms of domain architecture, S1 motif spans 627–695 (GQVYDGSVLR…EKGRLRLSVK (69 aa)).

This sequence belongs to the polyribonucleotide nucleotidyltransferase family. The cofactor is Mg(2+).

The protein resides in the cytoplasm. It carries out the reaction RNA(n+1) + phosphate = RNA(n) + a ribonucleoside 5'-diphosphate. Involved in mRNA degradation. Catalyzes the phosphorolysis of single-stranded polyribonucleotides processively in the 3'- to 5'-direction. The protein is Polyribonucleotide nucleotidyltransferase of Bordetella avium (strain 197N).